The primary structure comprises 82 residues: Small ribosomal subunit protein bS18 (82 aa).

The protein belongs to the bacterial ribosomal protein bS18 family. As to quaternary structure, part of the 30S ribosomal subunit. Forms a tight heterodimer with protein bS6.

Binds as a heterodimer with protein bS6 to the central domain of the 16S rRNA, where it helps stabilize the platform of the 30S subunit. The protein is Small ribosomal subunit protein bS18 of Bifidobacterium adolescentis (strain ATCC 15703 / DSM 20083 / NCTC 11814 / E194a).